The following is a 367-amino-acid chain: RYamide receptor (367 aa).

The Extracellular portion of the chain corresponds to Met-1–Ser-35. Asn-4, Asn-8, and Asn-21 each carry an N-linked (GlcNAc...) asparagine glycan. A helical membrane pass occupies residues Met-36–Leu-56. Residues Ser-57–Asn-66 lie on the Cytoplasmic side of the membrane. Residues Phe-67 to Thr-87 form a helical membrane-spanning segment. The Extracellular portion of the chain corresponds to Ser-88 to Ser-113. Asn-107 carries an N-linked (GlcNAc...) asparagine glycan. The helical transmembrane segment at Val-114–Trp-134 threads the bilayer. Over Pro-135–Arg-143 the chain is Cytoplasmic. Residues Phe-144–Ala-164 form a helical membrane-spanning segment. Residues Thr-165–Gln-212 are Extracellular-facing. Residues Tyr-213–Cys-233 form a helical membrane-spanning segment. The Cytoplasmic portion of the chain corresponds to His-234–Met-258. A helical transmembrane segment spans residues Met-259–Phe-279. At Lys-280 to His-282 the chain is on the extracellular side. The helical transmembrane segment at Ile-283 to Ala-303 threads the bilayer. The Cytoplasmic segment spans residues Cys-304 to Ala-367.

The protein belongs to the G-protein coupled receptor 1 family.

The protein resides in the cell membrane. Functionally, receptor for the neuropeptides RYamide-1 and RYamide-2. The activity of this receptor is mediated by G proteins which activate a phosphatidyl-inositol-calcium second messenger system. RYamide-2 is the most potent activator. This chain is RYamide receptor, found in Tribolium castaneum (Red flour beetle).